Reading from the N-terminus, the 681-residue chain is Hydroxyproline O-galactosyltransferase GALT6 (681 aa).

Residues Met1 to Gln28 lie on the Cytoplasmic side of the membrane. Residues Ile29–Phe49 traverse the membrane as a helical; Signal-anchor for type II membrane protein segment. The Lumenal segment spans residues Lys50 to Arg681. The interval Ser57–Thr80 is disordered. Positions Thr62–Ala78 are enriched in basic and acidic residues. The 215-residue stretch at Asn187–Gly401 folds into the Galectin domain. Residue Asn629 is glycosylated (N-linked (GlcNAc...) asparagine).

The protein belongs to the glycosyltransferase 31 family. Requires Mn(2+) as cofactor. In terms of tissue distribution, expressed in junveile leaves and stems, and at lower levels in cauline leaves and siliques.

It localises to the golgi apparatus membrane. It functions in the pathway protein modification; protein glycosylation. Functionally, possesses hydroxyproline O-galactosyltransferase activity. Transfers galactose from UDP-galactose to hydroxyproline residues in the arabinogalactan proteins (AGPs). Is specific for AGPs containing non-contiguous peptidyl hydroxyproline residues. Utilizes UDP-galactose solely as sugar donor. The addition of galactose onto the peptidyl hydroxyproline residues in AGP core proteins represents the first committed step in arabinogalactan polysaccharide addition. AGP glycans play essential roles in both vegetative and reproductive plant growth. The sequence is that of Hydroxyproline O-galactosyltransferase GALT6 from Arabidopsis thaliana (Mouse-ear cress).